The chain runs to 212 residues: Pyridoxine/pyridoxamine 5'-phosphate oxidase (212 aa).

Substrate-binding positions include 8 to 11 (RREY) and Lys-66. FMN-binding positions include 61–66 (RIVLLK), 76–77 (FT), Arg-82, Lys-83, and Gln-105. Residues Tyr-123, Arg-127, and Ser-131 each contribute to the substrate site. FMN contacts are provided by residues 140 to 141 (QS) and Trp-185. 191-193 (RLH) provides a ligand contact to substrate. Residue Arg-195 coordinates FMN.

Belongs to the pyridoxamine 5'-phosphate oxidase family. As to quaternary structure, homodimer. It depends on FMN as a cofactor.

It catalyses the reaction pyridoxamine 5'-phosphate + O2 + H2O = pyridoxal 5'-phosphate + H2O2 + NH4(+). It carries out the reaction pyridoxine 5'-phosphate + O2 = pyridoxal 5'-phosphate + H2O2. The protein operates within cofactor metabolism; pyridoxal 5'-phosphate salvage; pyridoxal 5'-phosphate from pyridoxamine 5'-phosphate: step 1/1. It functions in the pathway cofactor metabolism; pyridoxal 5'-phosphate salvage; pyridoxal 5'-phosphate from pyridoxine 5'-phosphate: step 1/1. Its function is as follows. Catalyzes the oxidation of either pyridoxine 5'-phosphate (PNP) or pyridoxamine 5'-phosphate (PMP) into pyridoxal 5'-phosphate (PLP). This Shewanella sp. (strain ANA-3) protein is Pyridoxine/pyridoxamine 5'-phosphate oxidase.